The primary structure comprises 376 residues: Queuine tRNA-ribosyltransferase (376 aa).

Asp-93 acts as the Proton acceptor in catalysis. Residues 93-97 (DSGGF), Asp-147, Gln-190, and Gly-217 contribute to the substrate site. The interval 248-254 (GVGKPGD) is RNA binding. Residue Asp-267 is the Nucleophile of the active site. Positions 305, 307, 310, and 336 each coordinate Zn(2+).

It belongs to the queuine tRNA-ribosyltransferase family. In terms of assembly, homodimer. Within each dimer, one monomer is responsible for RNA recognition and catalysis, while the other monomer binds to the replacement base PreQ1. Zn(2+) is required as a cofactor.

The enzyme catalyses 7-aminomethyl-7-carbaguanine + guanosine(34) in tRNA = 7-aminomethyl-7-carbaguanosine(34) in tRNA + guanine. The protein operates within tRNA modification; tRNA-queuosine biosynthesis. Functionally, catalyzes the base-exchange of a guanine (G) residue with the queuine precursor 7-aminomethyl-7-deazaguanine (PreQ1) at position 34 (anticodon wobble position) in tRNAs with GU(N) anticodons (tRNA-Asp, -Asn, -His and -Tyr). Catalysis occurs through a double-displacement mechanism. The nucleophile active site attacks the C1' of nucleotide 34 to detach the guanine base from the RNA, forming a covalent enzyme-RNA intermediate. The proton acceptor active site deprotonates the incoming PreQ1, allowing a nucleophilic attack on the C1' of the ribose to form the product. After dissociation, two additional enzymatic reactions on the tRNA convert PreQ1 to queuine (Q), resulting in the hypermodified nucleoside queuosine (7-(((4,5-cis-dihydroxy-2-cyclopenten-1-yl)amino)methyl)-7-deazaguanosine). The sequence is that of Queuine tRNA-ribosyltransferase from Dinoroseobacter shibae (strain DSM 16493 / NCIMB 14021 / DFL 12).